The primary structure comprises 558 residues: Glucose-6-phosphate isomerase (558 aa).

The active-site Proton donor is Glu362. Catalysis depends on residues His393 and Lys523.

The protein belongs to the GPI family.

It is found in the cytoplasm. The enzyme catalyses alpha-D-glucose 6-phosphate = beta-D-fructose 6-phosphate. It participates in carbohydrate degradation; glycolysis; D-glyceraldehyde 3-phosphate and glycerone phosphate from D-glucose: step 2/4. The polypeptide is Glucose-6-phosphate isomerase (Pgi) (Drosophila melanogaster (Fruit fly)).